We begin with the raw amino-acid sequence, 210 residues long: Interleukin-6 (210 aa).

Residues 1 to 25 (MNSLSTSAFSPVAFSLGLLLVMATA) form the signal peptide. Residues C72 and C78 are joined by a disulfide bond. S81 carries the phosphoserine modification. The cysteines at positions 101 and 111 are disulfide-linked.

The protein belongs to the IL-6 superfamily. Component of a hexamer of two molecules each of IL6, IL6R and IL6ST; first binds to IL6R to associate with the signaling subunit IL6ST. Interacts with IL6R (via the N-terminal ectodomain); this interaction may be affected by IL6R-binding with SORL1, hence decreasing IL6 cis signaling. Interacts with SORL1 (via the N-terminal ectodomain); this interaction leads to IL6 internalization and lysosomal degradation. May form a trimeric complex with the soluble SORL1 ectodomain and soluble IL6R receptor; this interaction might stabilize circulating IL6, hence promoting IL6 trans signaling.

The protein localises to the secreted. Its function is as follows. Cytokine with a wide variety of biological functions in immunity, tissue regeneration, and metabolism. Binds to IL6R, then the complex associates to the signaling subunit IL6ST/gp130 to trigger the intracellular IL6-signaling pathway. The interaction with the membrane-bound IL6R and IL6ST stimulates 'classic signaling', whereas the binding of IL6 and soluble IL6R to IL6ST stimulates 'trans-signaling'. Alternatively, 'cluster signaling' occurs when membrane-bound IL6:IL6R complexes on transmitter cells activate IL6ST receptors on neighboring receiver cells. In terms of biological role, IL6 is a potent inducer of the acute phase response. Rapid production of IL6 contributes to host defense during infection and tissue injury, but excessive IL6 synthesis is involved in disease pathology. In the innate immune response, is synthesized by myeloid cells, such as macrophages and dendritic cells, upon recognition of pathogens through toll-like receptors (TLRs) at the site of infection or tissue injury. In the adaptive immune response, is required for the differentiation of B cells into immunoglobulin-secreting cells. Plays a major role in the differentiation of CD4(+) T cell subsets. Essential factor for the development of T follicular helper (Tfh) cells that are required for the induction of germinal-center formation. Required to drive naive CD4(+) T cells to the Th17 lineage. Also required for proliferation of myeloma cells and the survival of plasmablast cells. Functionally, acts as an essential factor in bone homeostasis and on vessels directly or indirectly by induction of VEGF, resulting in increased angiogenesis activity and vascular permeability. Induces, through 'trans-signaling' and synergistically with IL1B and TNF, the production of VEGF. Involved in metabolic controls, is discharged into the bloodstream after muscle contraction increasing lipolysis and improving insulin resistance. 'Trans-signaling' in central nervous system also regulates energy and glucose homeostasis. Mediates, through GLP-1, crosstalk between insulin-sensitive tissues, intestinal L cells and pancreatic islets to adapt to changes in insulin demand. Also acts as a myokine. Plays a protective role during liver injury, being required for maintenance of tissue regeneration. Also has a pivotal role in iron metabolism by regulating HAMP/hepcidin expression upon inflammation or bacterial infection. Through activation of IL6ST-YAP-NOTCH pathway, induces inflammation-induced epithelial regeneration. The sequence is that of Interleukin-6 (IL6) from Mustela putorius furo (European domestic ferret).